The sequence spans 224 residues: Probable amino-acid permease protein YxeN (224 aa).

The next 6 membrane-spanning stretches (helical) occupy residues threonine 3–threonine 23, leucine 24–isoleucine 44, leucine 58–glycine 78, alanine 91–phenylalanine 111, phenylalanine 157–alanine 177, and phenylalanine 190–leucine 210. Residues leucine 20 to glutamine 211 form the ABC transmembrane type-1 domain.

This sequence belongs to the binding-protein-dependent transport system permease family. The complex is composed of two ATP-binding proteins (YxeO), two transmembrane proteins (YxeN) and a solute-binding protein (YxeM).

The protein resides in the cell membrane. Its function is as follows. Probably part of the ABC transporter complex YxeMNO that could be involved in amino-acid import. May transport S-methylcysteine. Probably responsible for the translocation of the substrate across the membrane. The polypeptide is Probable amino-acid permease protein YxeN (yxeN) (Bacillus subtilis (strain 168)).